The chain runs to 67 residues: UPF0434 protein Tcr_0959 (67 aa).

The protein belongs to the UPF0434 family.

This is UPF0434 protein Tcr_0959 from Hydrogenovibrio crunogenus (strain DSM 25203 / XCL-2) (Thiomicrospira crunogena).